Here is a 118-residue protein sequence, read N- to C-terminus: Holo-[acyl-carrier-protein] synthase (118 aa).

Positions 8 and 58 each coordinate Mg(2+).

This sequence belongs to the P-Pant transferase superfamily. AcpS family. Mg(2+) is required as a cofactor.

It localises to the cytoplasm. It carries out the reaction apo-[ACP] + CoA = holo-[ACP] + adenosine 3',5'-bisphosphate + H(+). Its function is as follows. Transfers the 4'-phosphopantetheine moiety from coenzyme A to a Ser of acyl-carrier-protein. The chain is Holo-[acyl-carrier-protein] synthase from Streptococcus uberis (strain ATCC BAA-854 / 0140J).